A 505-amino-acid chain; its full sequence is AMP phosphorylase (505 aa).

Residues Gly-170, 196 to 201 (SRAITS), and Thr-205 each bind AMP. Catalysis depends on Asp-258, which acts as the Proton donor. AMP is bound by residues Ser-266 and Lys-290.

This sequence belongs to the thymidine/pyrimidine-nucleoside phosphorylase family. Type 2 subfamily.

The enzyme catalyses AMP + phosphate = alpha-D-ribose 1,5-bisphosphate + adenine. It catalyses the reaction CMP + phosphate = cytosine + alpha-D-ribose 1,5-bisphosphate. It carries out the reaction UMP + phosphate = alpha-D-ribose 1,5-bisphosphate + uracil. Its function is as follows. Catalyzes the conversion of AMP and phosphate to adenine and ribose 1,5-bisphosphate (R15P). Exhibits phosphorylase activity toward CMP and UMP in addition to AMP. Functions in an archaeal AMP degradation pathway, together with R15P isomerase and RubisCO. The chain is AMP phosphorylase from Methanococcus maripaludis (strain DSM 14266 / JCM 13030 / NBRC 101832 / S2 / LL).